Consider the following 375-residue polypeptide: Carbamoyl phosphate synthase small chain (375 aa).

A CPSase region spans residues Met-1–Ile-184. Positions 44, 240, and 242 each coordinate L-glutamine. The Glutamine amidotransferase type-1 domain occupies Ile-188–Phe-375. Catalysis depends on Cys-268, which acts as the Nucleophile. Residues Leu-269, Gln-272, Asn-310, and Tyr-313 each contribute to the L-glutamine site. Residues His-351 and Glu-353 contribute to the active site.

Belongs to the CarA family. As to quaternary structure, composed of two chains; the small (or glutamine) chain promotes the hydrolysis of glutamine to ammonia, which is used by the large (or ammonia) chain to synthesize carbamoyl phosphate. Tetramer of heterodimers (alpha,beta)4.

The enzyme catalyses hydrogencarbonate + L-glutamine + 2 ATP + H2O = carbamoyl phosphate + L-glutamate + 2 ADP + phosphate + 2 H(+). It carries out the reaction L-glutamine + H2O = L-glutamate + NH4(+). It functions in the pathway amino-acid biosynthesis; L-arginine biosynthesis; carbamoyl phosphate from bicarbonate: step 1/1. The protein operates within pyrimidine metabolism; UMP biosynthesis via de novo pathway; (S)-dihydroorotate from bicarbonate: step 1/3. Functionally, small subunit of the glutamine-dependent carbamoyl phosphate synthetase (CPSase). CPSase catalyzes the formation of carbamoyl phosphate from the ammonia moiety of glutamine, carbonate, and phosphate donated by ATP, constituting the first step of 2 biosynthetic pathways, one leading to arginine and/or urea and the other to pyrimidine nucleotides. The small subunit (glutamine amidotransferase) binds and cleaves glutamine to supply the large subunit with the substrate ammonia. This Helicobacter pylori (strain J99 / ATCC 700824) (Campylobacter pylori J99) protein is Carbamoyl phosphate synthase small chain.